The primary structure comprises 124 residues: Small ribosomal subunit protein uS12 (124 aa).

Positions M1–P22 are disordered. D89 is modified (3-methylthioaspartic acid). The disordered stretch occupies residues T101 to S124. The segment covering K111 to S124 has biased composition (basic residues).

The protein belongs to the universal ribosomal protein uS12 family. As to quaternary structure, part of the 30S ribosomal subunit. Contacts proteins S8 and S17. May interact with IF1 in the 30S initiation complex.

Its function is as follows. With S4 and S5 plays an important role in translational accuracy. Functionally, interacts with and stabilizes bases of the 16S rRNA that are involved in tRNA selection in the A site and with the mRNA backbone. Located at the interface of the 30S and 50S subunits, it traverses the body of the 30S subunit contacting proteins on the other side and probably holding the rRNA structure together. The combined cluster of proteins S8, S12 and S17 appears to hold together the shoulder and platform of the 30S subunit. This chain is Small ribosomal subunit protein uS12, found in Marinobacter nauticus (strain ATCC 700491 / DSM 11845 / VT8) (Marinobacter aquaeolei).